A 306-amino-acid polypeptide reads, in one-letter code: Pantothenate kinase (306 aa).

Residue 91–98 participates in ATP binding; the sequence is GSVAVGKS.

Belongs to the prokaryotic pantothenate kinase family.

Its subcellular location is the cytoplasm. The catalysed reaction is (R)-pantothenate + ATP = (R)-4'-phosphopantothenate + ADP + H(+). It functions in the pathway cofactor biosynthesis; coenzyme A biosynthesis; CoA from (R)-pantothenate: step 1/5. The chain is Pantothenate kinase from Streptococcus pyogenes serotype M12 (strain MGAS2096).